The sequence spans 72 residues: Translation initiation factor IF-1 (72 aa).

Residues 1-72 (MAKDGVIEVE…NRGRITYRYK (72 aa)) form the S1-like domain.

This sequence belongs to the IF-1 family. Component of the 30S ribosomal translation pre-initiation complex which assembles on the 30S ribosome in the order IF-2 and IF-3, IF-1 and N-formylmethionyl-tRNA(fMet); mRNA recruitment can occur at any time during PIC assembly.

The protein resides in the cytoplasm. Functionally, one of the essential components for the initiation of protein synthesis. Stabilizes the binding of IF-2 and IF-3 on the 30S subunit to which N-formylmethionyl-tRNA(fMet) subsequently binds. Helps modulate mRNA selection, yielding the 30S pre-initiation complex (PIC). Upon addition of the 50S ribosomal subunit IF-1, IF-2 and IF-3 are released leaving the mature 70S translation initiation complex. In Bifidobacterium adolescentis (strain ATCC 15703 / DSM 20083 / NCTC 11814 / E194a), this protein is Translation initiation factor IF-1.